Consider the following 178-residue polypeptide: Mediator of RNA polymerase II transcription subunit 28 (178 aa).

A disordered region spans residues 1–25 (MAAPLGGMFSGQQPGPPQPPPGLLG). Positions 109–145 (QVIKEDVSELRNELQRKDALVQKHLTKLRHWQQVLED) form a coiled coil.

Belongs to the Mediator complex subunit 28 family. As to quaternary structure, component of the Mediator complex, which is composed of MED1, MED4, MED6, MED7, MED8, MED9, MED10, MED11, MED12, MED13, MED13L, MED14, MED15, MED16, MED17, MED18, MED19, MED20, MED21, MED22, MED23, MED24, MED25, MED26, MED27, MED29, MED30, MED31, CCNC, CDK8 and CDC2L6/CDK11. The MED12, MED13, CCNC and CDK8 subunits form a distinct module termed the CDK8 module. Mediator containing the CDK8 module is less active than Mediator lacking this module in supporting transcriptional activation. Individual preparations of the Mediator complex lacking one or more distinct subunits have been variously termed ARC, CRSP, DRIP, PC2, SMCC and TRAP. Forms a ternary complex with NF2/merlin and GRB2. Binds to actin.

The protein localises to the nucleus. It localises to the cytoplasm. Its subcellular location is the membrane. Functionally, component of the Mediator complex, a coactivator involved in the regulated transcription of nearly all RNA polymerase II-dependent genes. Mediator functions as a bridge to convey information from gene-specific regulatory proteins to the basal RNA polymerase II transcription machinery. Mediator is recruited to promoters by direct interactions with regulatory proteins and serves as a scaffold for the assembly of a functional preinitiation complex with RNA polymerase II and the general transcription factors. May be part of a complex containing NF2/merlin that participates in cellular signaling to the actin cytoskeleton downstream of tyrosine kinase signaling pathways. The protein is Mediator of RNA polymerase II transcription subunit 28 (MED28) of Bos taurus (Bovine).